Reading from the N-terminus, the 276-residue chain is Putative ABC transporter ATP-binding protein MA_4021 (276 aa).

The 243-residue stretch at 5–247 folds into the ABC transporter domain; the sequence is FDLKNISYSY…DLNLLLSTNL (243 aa). 38–45 is an ATP binding site; sequence GSNGSGKS.

It belongs to the ABC transporter superfamily.

The protein localises to the cell membrane. Functionally, probably part of an ABC transporter complex. Responsible for energy coupling to the transport system. The sequence is that of Putative ABC transporter ATP-binding protein MA_4021 from Methanosarcina acetivorans (strain ATCC 35395 / DSM 2834 / JCM 12185 / C2A).